The primary structure comprises 242 residues: 2-C-methyl-D-erythritol 4-phosphate cytidylyltransferase (242 aa).

It belongs to the IspD/TarI cytidylyltransferase family. IspD subfamily.

The enzyme catalyses 2-C-methyl-D-erythritol 4-phosphate + CTP + H(+) = 4-CDP-2-C-methyl-D-erythritol + diphosphate. The protein operates within isoprenoid biosynthesis; isopentenyl diphosphate biosynthesis via DXP pathway; isopentenyl diphosphate from 1-deoxy-D-xylulose 5-phosphate: step 2/6. Its function is as follows. Catalyzes the formation of 4-diphosphocytidyl-2-C-methyl-D-erythritol from CTP and 2-C-methyl-D-erythritol 4-phosphate (MEP). The polypeptide is 2-C-methyl-D-erythritol 4-phosphate cytidylyltransferase (Halorhodospira halophila (strain DSM 244 / SL1) (Ectothiorhodospira halophila (strain DSM 244 / SL1))).